Here is a 302-residue protein sequence, read N- to C-terminus: tRNA-cytidine(32) 2-sulfurtransferase (302 aa).

The PP-loop motif motif lies at 45-50; that stretch reads SGGKDS. Positions 120, 123, and 211 each coordinate [4Fe-4S] cluster.

This sequence belongs to the TtcA family. As to quaternary structure, homodimer. Mg(2+) serves as cofactor. The cofactor is [4Fe-4S] cluster.

The protein resides in the cytoplasm. The enzyme catalyses cytidine(32) in tRNA + S-sulfanyl-L-cysteinyl-[cysteine desulfurase] + AH2 + ATP = 2-thiocytidine(32) in tRNA + L-cysteinyl-[cysteine desulfurase] + A + AMP + diphosphate + H(+). The protein operates within tRNA modification. Catalyzes the ATP-dependent 2-thiolation of cytidine in position 32 of tRNA, to form 2-thiocytidine (s(2)C32). The sulfur atoms are provided by the cysteine/cysteine desulfurase (IscS) system. The chain is tRNA-cytidine(32) 2-sulfurtransferase from Cellvibrio japonicus (strain Ueda107) (Pseudomonas fluorescens subsp. cellulosa).